A 413-amino-acid polypeptide reads, in one-letter code: Serine/threonine transporter SstT (413 aa).

A run of 9 helical transmembrane segments spans residues 15-35, 48-68, 82-102, 141-161, 178-198, 216-236, 290-310, 330-350, and 357-377; these read NIVI…TLAP, FVSA…AASI, VIVL…VMSF, ALMT…GLGL, CISA…FGLV, LLAV…PLIV, IPLG…VLTL, LVAA…LLLI, and FGIS…IGVV.

This sequence belongs to the dicarboxylate/amino acid:cation symporter (DAACS) (TC 2.A.23) family.

Its subcellular location is the cell inner membrane. The catalysed reaction is L-serine(in) + Na(+)(in) = L-serine(out) + Na(+)(out). It catalyses the reaction L-threonine(in) + Na(+)(in) = L-threonine(out) + Na(+)(out). Functionally, involved in the import of serine and threonine into the cell, with the concomitant import of sodium (symport system). This is Serine/threonine transporter SstT from Aliivibrio fischeri (strain ATCC 700601 / ES114) (Vibrio fischeri).